Reading from the N-terminus, the 396-residue chain is Elongation factor Tu (396 aa).

A tr-type G domain is found at 10 to 206 (KPHVNIGTIG…AVDESVPDPV (197 aa)). A G1 region spans residues 19–26 (GHVDHGKT). A GTP-binding site is contributed by 19 to 26 (GHVDHGKT). Position 26 (Thr26) interacts with Mg(2+). A G2 region spans residues 62–66 (GITIN). The interval 83-86 (DAPG) is G3. GTP-binding positions include 83 to 87 (DAPGH) and 138 to 141 (NKSD). The G4 stretch occupies residues 138–141 (NKSD). The G5 stretch occupies residues 176 to 178 (SGL).

Belongs to the TRAFAC class translation factor GTPase superfamily. Classic translation factor GTPase family. EF-Tu/EF-1A subfamily. In terms of assembly, monomer.

It localises to the cytoplasm. It carries out the reaction GTP + H2O = GDP + phosphate + H(+). Functionally, GTP hydrolase that promotes the GTP-dependent binding of aminoacyl-tRNA to the A-site of ribosomes during protein biosynthesis. The sequence is that of Elongation factor Tu from Pseudarthrobacter chlorophenolicus (strain ATCC 700700 / DSM 12829 / CIP 107037 / JCM 12360 / KCTC 9906 / NCIMB 13794 / A6) (Arthrobacter chlorophenolicus).